The following is a 537-amino-acid chain: Mitochondrial distribution and morphology protein 34 (537 aa).

The SMP-LTD domain occupies 1 to 195 (MAFNFNWSPL…LPAIIHRLSL (195 aa)). Disordered stretches follow at residues 320 to 339 (YTFSDNGSQDQGSLPSRPSL), 348 to 403 (GLSL…IMPH), 421 to 493 (GRSP…DTSS), and 516 to 537 (KNGNPTFWDDQDDTPPPAYEAR). Basic residues predominate over residues 355–371 (RHSKAGRKKKTRVVNLR). Positions 378 to 391 (ANSEEEEDTPETDS) are enriched in acidic residues. A compositionally biased stretch (polar residues) spans 425–441 (DLQQQPRRPSFRAQATN).

The protein belongs to the MDM34 family. As to quaternary structure, component of the ER-mitochondria encounter structure (ERMES) or MDM complex, composed of MMM1, MDM10, MDM12 and MDM34.

The protein localises to the mitochondrion outer membrane. Functionally, component of the ERMES/MDM complex, which serves as a molecular tether to connect the endoplasmic reticulum (ER) and mitochondria. Components of this complex are involved in the control of mitochondrial shape and protein biogenesis, and function in nonvesicular lipid trafficking between the ER and mitochondria. MDM34 is required for the interaction of the ER-resident membrane protein MMM1 and the outer mitochondrial membrane-resident beta-barrel protein MDM10. This Chaetomium globosum (strain ATCC 6205 / CBS 148.51 / DSM 1962 / NBRC 6347 / NRRL 1970) (Soil fungus) protein is Mitochondrial distribution and morphology protein 34.